The primary structure comprises 179 residues: Large ribosomal subunit protein uL6 (179 aa).

The protein belongs to the universal ribosomal protein uL6 family. Part of the 50S ribosomal subunit.

This protein binds to the 23S rRNA, and is important in its secondary structure. It is located near the subunit interface in the base of the L7/L12 stalk, and near the tRNA binding site of the peptidyltransferase center. This chain is Large ribosomal subunit protein uL6, found in Solidesulfovibrio magneticus (strain ATCC 700980 / DSM 13731 / RS-1) (Desulfovibrio magneticus).